A 343-amino-acid chain; its full sequence is Holliday junction branch migration complex subunit RuvB (343 aa).

Residues 1 to 185 are large ATPase domain (RuvB-L); the sequence is MEQEDFNIRE…FGINLHLEYY (185 aa). ATP contacts are provided by residues Leu24, Arg25, Gly66, Lys69, Thr70, Thr71, 132 to 134, Arg175, Tyr185, and Arg222; that span reads EDY. Residue Thr70 coordinates Mg(2+). A small ATPAse domain (RuvB-S) region spans residues 186 to 256; sequence DDDILSNIIR…IAQFALEALN (71 aa). The interval 259–343 is head domain (RuvB-H); it reads KYGLDEIDNK…YSSQKTLFND (85 aa). Residues Arg314 and Arg319 each coordinate DNA.

It belongs to the RuvB family. As to quaternary structure, homohexamer. Forms an RuvA(8)-RuvB(12)-Holliday junction (HJ) complex. HJ DNA is sandwiched between 2 RuvA tetramers; dsDNA enters through RuvA and exits via RuvB. An RuvB hexamer assembles on each DNA strand where it exits the tetramer. Each RuvB hexamer is contacted by two RuvA subunits (via domain III) on 2 adjacent RuvB subunits; this complex drives branch migration. In the full resolvosome a probable DNA-RuvA(4)-RuvB(12)-RuvC(2) complex forms which resolves the HJ.

It localises to the cytoplasm. The enzyme catalyses ATP + H2O = ADP + phosphate + H(+). In terms of biological role, the RuvA-RuvB-RuvC complex processes Holliday junction (HJ) DNA during genetic recombination and DNA repair, while the RuvA-RuvB complex plays an important role in the rescue of blocked DNA replication forks via replication fork reversal (RFR). RuvA specifically binds to HJ cruciform DNA, conferring on it an open structure. The RuvB hexamer acts as an ATP-dependent pump, pulling dsDNA into and through the RuvAB complex. RuvB forms 2 homohexamers on either side of HJ DNA bound by 1 or 2 RuvA tetramers; 4 subunits per hexamer contact DNA at a time. Coordinated motions by a converter formed by DNA-disengaged RuvB subunits stimulates ATP hydrolysis and nucleotide exchange. Immobilization of the converter enables RuvB to convert the ATP-contained energy into a lever motion, pulling 2 nucleotides of DNA out of the RuvA tetramer per ATP hydrolyzed, thus driving DNA branch migration. The RuvB motors rotate together with the DNA substrate, which together with the progressing nucleotide cycle form the mechanistic basis for DNA recombination by continuous HJ branch migration. Branch migration allows RuvC to scan DNA until it finds its consensus sequence, where it cleaves and resolves cruciform DNA. This is Holliday junction branch migration complex subunit RuvB from Bacteroides thetaiotaomicron (strain ATCC 29148 / DSM 2079 / JCM 5827 / CCUG 10774 / NCTC 10582 / VPI-5482 / E50).